A 302-amino-acid chain; its full sequence is Glutaminase (302 aa).

Residues serine 61, asparagine 111, glutamate 155, asparagine 162, tyrosine 186, tyrosine 238, and valine 256 each coordinate substrate.

The protein belongs to the glutaminase family. In terms of assembly, homotetramer.

The enzyme catalyses L-glutamine + H2O = L-glutamate + NH4(+). This is Glutaminase from Ectopseudomonas mendocina (strain ymp) (Pseudomonas mendocina).